The following is a 272-amino-acid chain: Urease accessory protein UreD (272 aa).

The protein belongs to the UreD family. UreD, UreF and UreG form a complex that acts as a GTP-hydrolysis-dependent molecular chaperone, activating the urease apoprotein by helping to assemble the nickel containing metallocenter of UreC. The UreE protein probably delivers the nickel.

Its subcellular location is the cytoplasm. Required for maturation of urease via the functional incorporation of the urease nickel metallocenter. The protein is Urease accessory protein UreD of Opitutus terrae (strain DSM 11246 / JCM 15787 / PB90-1).